We begin with the raw amino-acid sequence, 457 residues long: Putative zinc finger CCCH domain-containing protein 21 (457 aa).

Disordered regions lie at residues 51-73, 102-130, 195-221, and 280-329; these read PTSS…ARAS, LESP…EKLL, TSPS…ERER, and RKQA…RLRV. The segment covering 57–66 has biased composition (gly residues); the sequence is DGGGGGGGGY. A coiled-coil region spans residues 215-276; that stretch reads ASAEREREVR…HLSLLLEELE (62 aa). 2 consecutive C3H1-type zinc fingers follow at residues 382 to 409 and 419 to 447; these read AAKT…HGLQ and RYKT…HSPL.

The sequence is that of Putative zinc finger CCCH domain-containing protein 21 from Oryza sativa subsp. japonica (Rice).